A 284-amino-acid polypeptide reads, in one-letter code: MKVECASNIGFCFGVRRAINILEKTASERGGVETLGALVHNQQVLNRLSGMGVRVVKNIDDISGRTVAISSHGVGPAVLAELKSKGLEIVDTTCPFVKRAQVAAKRFHDAGFFTVIYGDVNHPEVKGILGWAGGNGLATLNPQGLDDIPDLSRYIGVLSQTTQIPTGFTSFVKNVIDQALVKDAEIRIADTLCHDIRDRQAAALELAGRVDLMLVIGGHNSANTRHLLDLCKTVSNTHLIETASELQTDWLKGVSRIGITSGASTDETTISEVCSYLDRLSAGA.

Cysteine 12 lines the [4Fe-4S] cluster pocket. (2E)-4-hydroxy-3-methylbut-2-enyl diphosphate contacts are provided by histidine 40 and histidine 72. Dimethylallyl diphosphate-binding residues include histidine 40 and histidine 72. Residues histidine 40 and histidine 72 each coordinate isopentenyl diphosphate. Cysteine 94 lines the [4Fe-4S] cluster pocket. Histidine 122 is a binding site for (2E)-4-hydroxy-3-methylbut-2-enyl diphosphate. Histidine 122 provides a ligand contact to dimethylallyl diphosphate. Histidine 122 contributes to the isopentenyl diphosphate binding site. Catalysis depends on glutamate 124, which acts as the Proton donor. Threonine 161 is a binding site for (2E)-4-hydroxy-3-methylbut-2-enyl diphosphate. Position 193 (cysteine 193) interacts with [4Fe-4S] cluster. (2E)-4-hydroxy-3-methylbut-2-enyl diphosphate-binding residues include serine 221, asparagine 223, and serine 264. Dimethylallyl diphosphate contacts are provided by serine 221, asparagine 223, and serine 264. Isopentenyl diphosphate-binding residues include serine 221, asparagine 223, and serine 264.

Belongs to the IspH family. It depends on [4Fe-4S] cluster as a cofactor.

It carries out the reaction isopentenyl diphosphate + 2 oxidized [2Fe-2S]-[ferredoxin] + H2O = (2E)-4-hydroxy-3-methylbut-2-enyl diphosphate + 2 reduced [2Fe-2S]-[ferredoxin] + 2 H(+). It catalyses the reaction dimethylallyl diphosphate + 2 oxidized [2Fe-2S]-[ferredoxin] + H2O = (2E)-4-hydroxy-3-methylbut-2-enyl diphosphate + 2 reduced [2Fe-2S]-[ferredoxin] + 2 H(+). The protein operates within isoprenoid biosynthesis; dimethylallyl diphosphate biosynthesis; dimethylallyl diphosphate from (2E)-4-hydroxy-3-methylbutenyl diphosphate: step 1/1. Its pathway is isoprenoid biosynthesis; isopentenyl diphosphate biosynthesis via DXP pathway; isopentenyl diphosphate from 1-deoxy-D-xylulose 5-phosphate: step 6/6. Its function is as follows. Catalyzes the conversion of 1-hydroxy-2-methyl-2-(E)-butenyl 4-diphosphate (HMBPP) into a mixture of isopentenyl diphosphate (IPP) and dimethylallyl diphosphate (DMAPP). Acts in the terminal step of the DOXP/MEP pathway for isoprenoid precursor biosynthesis. The polypeptide is 4-hydroxy-3-methylbut-2-enyl diphosphate reductase (Dehalococcoides mccartyi (strain CBDB1)).